The primary structure comprises 326 residues: Ornithine carbamoyltransferase (326 aa).

Residues 54-57 (STRT), Gln-81, Arg-105, and 132-135 (HPTQ) contribute to the carbamoyl phosphate site. L-ornithine is bound by residues Asn-164, Asp-225, and 229-230 (SM). Residues 266–267 (CL) and Arg-311 each bind carbamoyl phosphate.

This sequence belongs to the aspartate/ornithine carbamoyltransferase superfamily. OTCase family.

The protein localises to the cytoplasm. The catalysed reaction is carbamoyl phosphate + L-ornithine = L-citrulline + phosphate + H(+). It functions in the pathway amino-acid biosynthesis; L-arginine biosynthesis; L-arginine from L-ornithine and carbamoyl phosphate: step 1/3. Its function is as follows. Reversibly catalyzes the transfer of the carbamoyl group from carbamoyl phosphate (CP) to the N(epsilon) atom of ornithine (ORN) to produce L-citrulline. The protein is Ornithine carbamoyltransferase (argF) of Streptococcus mutans serotype c (strain ATCC 700610 / UA159).